Consider the following 809-residue polypeptide: MSDPQEKSHIILKVWCFILGLALLITGAFYVIGGGKLISLGGSWYFLIAGLMITTSAFFMFKKKATGVWLYALAFIGTVIWALIDAGFEFWPLHSRLMFPAGLFAAVMLTLPSIRKYQYQTPMSAPAYVIGGLTVLGMLGGLYGMFIPHETVKASGEELPLVPVDPAKKQVNWDHYGNDAGGSRFVALDQINRNNVSKLKEAWRFRTGDFTTGTGNGAEDQMTPLQVGNKVFLCTPHNNIFAIDADSGKQLWKAEVNSTADAWERCRGVAYFDSTQPLVQPTLAGATPVAALAANTECPRRVYTNTVDGRLIAVNADTGARCKDFGVNGTVNLHEGLGENTKAPRFEVTSAPTIAGTTIVVGSRIADNVAADMPGGVIRAYDVITGKLRWAFDPRNPDPNYVLKPGEIYKRSSTNSWAAMSYDPQMNTVFLPMGSSSVDVWGGNRTAADHKYNTSVLALDATTGKEKWVYNTVHNDLWDFDLPMQPSLVDFPMKDGTTKPAVVIGTKSGQFYVLDRVTGKPLTKVIEQPIKVADIPGEQYSKTQPRSVEMPQIGNQTLKESDMWGATPFDQLMCRINFKSMRYDGLYTAPGTDVSLSFPGSLGGMNWGSIAFDPTHRYMFVNDMRLGLWIQLIKQTPEDIKIQANGGEKVNTGMGAVPMKGTPYKVNKNRFMSALGIPCQKPPFGTMTAIDMKTRQVAWQVPLGTIQDTGPMGIKMGLKAPIGMPTIGGPMATQGGLVFFAATQDYYLRAFNSSNGKELWKARLPVGSQGTPMSYMSPKTGKQYVVVSAGGARQSPDHGDYVIAYALEK.

5 helical membrane passes run 14–34 (VWCFILGLALLITGAFYVIGG), 41–61 (GGSWYFLIAGLMITTSAFFMF), 68–88 (VWLYALAFIGTVIWALIDAGF), 90–110 (FWPLHSRLMFPAGLFAAVMLT), and 127–147 (AYVIGGLTVLGMLGGLYGMFI).

This sequence belongs to the bacterial PQQ dehydrogenase family. Pyrroloquinoline quinone serves as cofactor.

The protein localises to the cell membrane. It catalyses the reaction L-quinate + a quinone = 3-dehydroquinate + a quinol. The catalysed reaction is shikimate + a quinone = 3-dehydroshikimate + a quinol. The protein operates within aromatic compound metabolism; 3,4-dihydroxybenzoate biosynthesis; 3-dehydroquinate from D-quinate (PQQ route): step 1/1. Can act either on quinate or on shikimate. In Acinetobacter baylyi (strain ATCC 33305 / BD413 / ADP1), this protein is Quinate/shikimate dehydrogenase (quinone) (quiA).